A 164-amino-acid polypeptide reads, in one-letter code: Transmembrane protein B169L (164 aa).

Transmembrane regions (helical) follow at residues 28 to 48 (NPFI…FAIC) and 60 to 80 (TAIY…YVLN). The N-linked (GlcNAc...) asparagine; by host glycan is linked to Asn88. The disordered stretch occupies residues 114–142 (SPPSVPDELEEDRPKMIPAGSKPADFKPA).

Belongs to the asfivirus B169L family.

It localises to the host membrane. Its subcellular location is the virion. This is Transmembrane protein B169L from Ornithodoros (relapsing fever ticks).